The sequence spans 504 residues: Maturase K (504 aa).

The protein belongs to the intron maturase 2 family. MatK subfamily.

The protein resides in the plastid. Its subcellular location is the chloroplast. Functionally, usually encoded in the trnK tRNA gene intron. Probably assists in splicing its own and other chloroplast group II introns. The sequence is that of Maturase K from Cucumis sativus (Cucumber).